Reading from the N-terminus, the 347-residue chain is Probable arabinogalactan endo-beta-1,4-galactanase A (347 aa).

Positions 1-16 are cleaved as a signal peptide; the sequence is MLFSYLLATLPLLANA. The Proton donor role is filled by E150. The active-site Nucleophile is E260.

Belongs to the glycosyl hydrolase 53 family.

It localises to the secreted. The catalysed reaction is The enzyme specifically hydrolyzes (1-&gt;4)-beta-D-galactosidic linkages in type I arabinogalactans.. Endogalactanase involved in the degradation of plant cell wall polysaccharides, and more particularly of hairy regions of pectin. In Aspergillus flavus (strain ATCC 200026 / FGSC A1120 / IAM 13836 / NRRL 3357 / JCM 12722 / SRRC 167), this protein is Probable arabinogalactan endo-beta-1,4-galactanase A (galA).